The primary structure comprises 858 residues: Volume-regulated anion channel subunit LRRC8D (858 aa).

Topologically, residues 1–22 are cytoplasmic; it reads MFTLAEVASLNDIQPTYRILKP. A helical transmembrane segment spans residues 23 to 48; that stretch reads WWDVFMDYLAVVMLMVAIFAGTMQLT. Residues 49–163 lie on the Extracellular side of the membrane; the sequence is KDQVVCLPVL…YHLALPWYSK (115 aa). Cys-54 and Cys-354 are disulfide-bonded. The segment at 118-137 is disordered; that stretch reads AESTFPSQETKKEKRDPTGR. Residues 126-137 show a composition bias toward basic and acidic residues; sequence ETKKEKRDPTGR. Residues 164-182 traverse the membrane as a helical segment; it reads YFPYLALIHTIILMVSSNF. Over 183–308 the chain is Cytoplasmic; that stretch reads WFKYPKTCSK…EDSDLIYKLY (126 aa). Positions 221-251 are disordered; it reads SEENKQRITGAQTLPKHVSTSSDEGSPSAST. Residues 227-251 show a composition bias toward polar residues; it reads RITGAQTLPKHVSTSSDEGSPSAST. Phosphoserine is present on residues Ser-241, Ser-242, and Ser-246. A helical membrane pass occupies residues 309 to 330; that stretch reads VVQTLIKTAKFIFILCYTANFV. Over 331–360 the chain is Extracellular; the sequence is NAISFEHVCKPKVEHLTGYEVFECTHNMAY. Residues 361 to 386 traverse the membrane as a helical segment; that stretch reads MLKKLLISYISIICVYGFICLYTLFW. Residues 387-858 lie on the Cytoplasmic side of the membrane; sequence LFRIPLKEYS…DVNVPFANGI (472 aa). 13 LRR repeats span residues 514–534, 538–559, 561–582, 589–609, 612–632, 636–657, 659–680, 684–705, 707–728, 730–751, 753–774, 776–797, and 799–820; these read NLQELHLCHCPAKVEQTAFSF, HLRCLHVKFTDVAEIPAWVYLL, NLRELYLIGNLNSENNKMIGLE, HLKILHVKSNLTKVPSNITDV, HLTKLVIHNDGTKLLVLNSLK, NVAELELQNCELERIPHAIFSL, NLQELDLKSNSIRTIEEIISFQ, RLTCLKLWHNKIVAIPPSITHV, NLESLYFSNNKLESLPVAVFSL, KLRCLDVSYNNISTIPIEIGLL, NLQHLHITGNKVDVLPKQLFKC, KLRTLNLGQNCIASLPEKISQL, and QLTQLELKGNCLDRLPAQLGQC.

It belongs to the LRRC8 family. Heterohexamer; oligomerizes with other LRRC8 proteins (LRRC8A, LRRC8B, LRRC8C and/or LRRC8E) to form a heterohexamer. In vivo, the subunit composition may depend primarily on expression levels, and heterooligomeric channels containing various proportions of the different LRRC8 proteins may coexist.

It localises to the cell membrane. The protein localises to the endoplasmic reticulum membrane. The catalysed reaction is chloride(in) = chloride(out). It carries out the reaction iodide(out) = iodide(in). It catalyses the reaction taurine(out) = taurine(in). Functionally, non-essential component of the volume-regulated anion channel (VRAC, also named VSOAC channel), an anion channel required to maintain a constant cell volume in response to extracellular or intracellular osmotic changes. The VRAC channel conducts iodide better than chloride and can also conduct organic osmolytes like taurine. Plays a redundant role in the efflux of amino acids, such as aspartate, in response to osmotic stress. Channel activity requires LRRC8A plus at least one other family member (LRRC8B, LRRC8C, LRRC8D or LRRC8E); channel characteristics depend on the precise subunit composition. Also acts as a regulator of glucose-sensing in pancreatic beta cells: VRAC currents, generated in response to hypotonicity- or glucose-induced beta cell swelling, depolarize cells, thereby causing electrical excitation, leading to increase glucose sensitivity and insulin secretion. VRAC channels containing LRRC8D inhibit transport of immunoreactive cyclic dinucleotide GMP-AMP (2'-3'-cGAMP), an immune messenger produced in response to DNA virus in the cytosol. This Rattus norvegicus (Rat) protein is Volume-regulated anion channel subunit LRRC8D.